Consider the following 432-residue polypeptide: Pachytene checkpoint protein 2 homolog (432 aa).

Residue 179-186 participates in ATP binding; it reads GPPGTGKT.

Belongs to the AAA ATPase family. PCH2 subfamily.

In terms of biological role, plays a key role in chromosome recombination and chromosome structure development during meiosis. Required at early steps in meiotic recombination that leads to non-crossovers pathways. Also needed for efficient completion of homologous synapsis by influencing crossover distribution along the chromosomes affecting both crossovers and non-crossovers pathways. This chain is Pachytene checkpoint protein 2 homolog (trip13), found in Xenopus tropicalis (Western clawed frog).